A 416-amino-acid chain; its full sequence is Probable sarcosine oxidase (416 aa).

An FAD-binding site is contributed by 10-40 (DVIVVGAGVMGSSAAYQLAKRGQKTLLLEQF). S-8alpha-FAD cysteine is present on Cys-325.

This sequence belongs to the MSOX/MTOX family. Requires FAD as cofactor.

It catalyses the reaction sarcosine + O2 + H2O = formaldehyde + glycine + H2O2. The polypeptide is Probable sarcosine oxidase (Arabidopsis thaliana (Mouse-ear cress)).